Consider the following 108-residue polypeptide: Iron-sulfur cluster assembly protein CyaY (108 aa).

It belongs to the frataxin family.

Functionally, involved in iron-sulfur (Fe-S) cluster assembly. May act as a regulator of Fe-S biogenesis. The chain is Iron-sulfur cluster assembly protein CyaY from Pseudoalteromonas atlantica (strain T6c / ATCC BAA-1087).